The sequence spans 152 residues: UPF0225 protein YchJ (152 aa).

It belongs to the UPF0225 family.

In Shigella boydii serotype 18 (strain CDC 3083-94 / BS512), this protein is UPF0225 protein YchJ.